The sequence spans 469 residues: MASAVPLTMMWEEVTCSICLDPMVEPMSIECGHSFCQECISEVGKEGGSVCPVCRRHFLLQNLRPNRQVANMVDNLRKISQGAKESPHGELCVVHREKIHLFCEEDGKALCWVCSQSQKHRDHPMVPIEEAAQEYQEKLQVALNKLRHKQELAEKLELDIAMKKASWKGKVEAHKLRIHEEFVRQKNFLAEEEQKQLQKLEEEERQQLRTLGDTEARLAQQIQALQELIAELERRRRGSALELLQEVKSVLERSESWNLKELDVASTDLRNVFYVPGIKKMLRTCGVHITLDPQTANPWLILSENRRQVRLANTRQEVPENEERFDSYPMVLGAQRFDSGKVYWEVDVTGKEAWDLGVCRDNVRRKGQFLLNSDTGFWIIWLWNKQKYEAGTCPQTPLHLQVPPNRIGIFLDYEASTVSFYNITDHASLIYTFSECAFAGPLRPFFNPGFNDRGTNSAPLILCPLKTGW.

The RING-type zinc finger occupies 16–55 (CSICLDPMVEPMSIECGHSFCQECISEVGKEGGSVCPVCR). The B box-type zinc finger occupies 87–128 (PHGELCVVHREKIHLFCEEDGKALCWVCSQSQKHRDHPMVPI). Residues cysteine 92, histidine 95, cysteine 114, and histidine 120 each contribute to the Zn(2+) site. Residues 128–245 (IEEAAQEYQE…RRGSALELLQ (118 aa)) adopt a coiled-coil conformation. At serine 266 the chain carries Phosphoserine. A B30.2/SPRY domain is found at 268 to 467 (DLRNVFYVPG…APLILCPLKT (200 aa)).

It belongs to the TRIM/RBCC family. In terms of assembly, homotrimer. Interacts (via C-terminus) with IRF8 (via C-terminus). Component of a SCF(SKP2)-like complex containing CUL1, SKP1, TRIM21 and SKP2. Interacts with CALR, CUL1, FBXW11, HSPA5, IKBKB, IRF3, SKP1 and VCP. Interacts with SKP2; the interaction with SKP2 does not depend on an intact F-box domain. Interacts (via N-terminus and C-terminus) with DCP2 (via N-terminus and C-terminus). Interacts with ULK1, BECN1 and with ATG8 family members, including GABARAP, GABARAPL1, GABARAPL2 and MAP1LC3C/LC3C. Interacts with TRIM21 and SQSTM1/sequestosome 1. Interacts with IRF3. Interacts (via the SPRY domain) with NMI (via coiled-coil domain); the interaction promotes 'Lys-63'-linked ubiquitination of NMI. Interacts with IFI35 and NMI; the interaction facilitates NMI-IFI35 complex formation. Autoubiquitinated; does not lead to its proteasomal degradation. Deubiquitinated by USP4; leading to its stabilization.

It is found in the cytoplasm. The protein resides in the cytoplasmic vesicle. The protein localises to the autophagosome. It localises to the nucleus. Its subcellular location is the P-body. It is found in the stress granule. It carries out the reaction S-ubiquitinyl-[E2 ubiquitin-conjugating enzyme]-L-cysteine + [acceptor protein]-L-lysine = [E2 ubiquitin-conjugating enzyme]-L-cysteine + N(6)-ubiquitinyl-[acceptor protein]-L-lysine.. Its pathway is protein modification; protein ubiquitination. Its function is as follows. E3 ubiquitin-protein ligase whose activity is dependent on E2 enzymes, UBE2D1, UBE2D2, UBE2E1 and UBE2E2. Forms a ubiquitin ligase complex in cooperation with the E2 UBE2D2 that is used not only for the ubiquitination of USP4 and IKBKB but also for its self-ubiquitination. Component of cullin-RING-based SCF (SKP1-CUL1-F-box protein) E3 ubiquitin-protein ligase complexes such as SCF(SKP2)-like complexes. A TRIM21-containing SCF(SKP2)-like complex is shown to mediate ubiquitination of CDKN1B ('Thr-187' phosphorylated-form), thereby promoting its degradation by the proteasome. Monoubiquitinates IKBKB that will negatively regulates Tax-induced NF-kappa-B signaling. Negatively regulates IFN-beta production post-pathogen recognition by catalyzing polyubiquitin-mediated degradation of IRF3. Mediates the ubiquitin-mediated proteasomal degradation of IgG1 heavy chain, which is linked to the VCP-mediated ER-associated degradation (ERAD) pathway. Promotes IRF8 ubiquitination, which enhanced the ability of IRF8 to stimulate cytokine genes transcription in macrophages. Plays a role in the regulation of the cell cycle progression. Enhances the decapping activity of DCP2. Exists as a ribonucleoprotein particle present in all mammalian cells studied and composed of a single polypeptide and one of four small RNA molecules. At least two isoforms are present in nucleated and red blood cells, and tissue specific differences in RO/SSA proteins have been identified. The common feature of these proteins is their ability to bind HY RNAs.2. Involved in the regulation of innate immunity and the inflammatory response in response to IFNG/IFN-gamma. Organizes autophagic machinery by serving as a platform for the assembly of ULK1, Beclin 1/BECN1 and ATG8 family members and recognizes specific autophagy targets, thus coordinating target recognition with assembly of the autophagic apparatus and initiation of autophagy. Also regulates autophagy through FIP200/RB1CC1 ubiquitination and subsequent decreased protein stability. Represses the innate antiviral response by facilitating the formation of the NMI-IFI35 complex through 'Lys-63'-linked ubiquitination of NMI. During viral infection, promotes cell pyroptosis by mediating 'Lys-6'-linked ubiquitination of ISG12a/IFI27, facilitating its translocation into the mitochondria and subsequent CASP3 activation. When up-regulated through the IFN/JAK/STAT signaling pathway, promotes 'Lys-27'-linked ubiquitination of MAVS, leading to the recruitment of TBK1 and up-regulation of innate immunity. Mediates 'Lys-63'-linked polyubiquitination of G3BP1 in response to heat shock, leading to stress granule disassembly. This Bos taurus (Bovine) protein is E3 ubiquitin-protein ligase TRIM21 (TRIM21).